A 127-amino-acid polypeptide reads, in one-letter code: Aspartate 1-decarboxylase (127 aa).

Ser25 functions as the Schiff-base intermediate with substrate; via pyruvic acid in the catalytic mechanism. Ser25 carries the post-translational modification Pyruvic acid (Ser). Residue Thr57 participates in substrate binding. The Proton donor role is filled by Tyr58. Residue 73 to 75 participates in substrate binding; sequence GAA.

Belongs to the PanD family. As to quaternary structure, heterooctamer of four alpha and four beta subunits. It depends on pyruvate as a cofactor. Post-translationally, is synthesized initially as an inactive proenzyme, which is activated by self-cleavage at a specific serine bond to produce a beta-subunit with a hydroxyl group at its C-terminus and an alpha-subunit with a pyruvoyl group at its N-terminus.

The protein localises to the cytoplasm. The catalysed reaction is L-aspartate + H(+) = beta-alanine + CO2. It participates in cofactor biosynthesis; (R)-pantothenate biosynthesis; beta-alanine from L-aspartate: step 1/1. Functionally, catalyzes the pyruvoyl-dependent decarboxylation of aspartate to produce beta-alanine. This is Aspartate 1-decarboxylase from Bacillus cereus (strain 03BB102).